Consider the following 222-residue polypeptide: MFEKYFPNVDLTELWNATYETLYMTLISLLFAFVIGVILGLLLFLTSKGSLWQNKAVNSVIAAVVNIFRSIPFLILIILLLGFTKFLVGTILGPNAALPALVIGSAPFYARLVEIALREVDKGVIEAAKSMGAKTSTIIFKVLIPESMPALISGITVTAIALIGSTAIAGAIGSGGLGNLAYVEGYQSNNADVTFVATVFILIIVFIIQIIGDLITNIIDKR.

Positions Thr-18–Gly-212 constitute an ABC transmembrane type-1 domain. 5 helical membrane-spanning segments follow: residues Thr-25 to Leu-45, Phe-73 to Gly-93, Ala-97 to Leu-117, Ile-152 to Ile-172, and Phe-195 to Ile-215.

This sequence belongs to the binding-protein-dependent transport system permease family. CysTW subfamily. As to quaternary structure, the complex is composed of two ATP-binding proteins (MetN), two transmembrane proteins (MetP) and a solute-binding protein (MetQ).

The protein resides in the cell membrane. Functionally, part of the ABC transporter complex MetNPQ involved in methionine import. Responsible for the translocation of the substrate across the membrane. It has also been shown to be involved in methionine sulfoxide transport. The sequence is that of Methionine import system permease protein MetP (metP) from Bacillus subtilis (strain 168).